Here is a 78-residue protein sequence, read N- to C-terminus: Acyl carrier protein (78 aa).

The Carrier domain maps to 2-77 (SDIADRVKKI…DAIKFLEKNS (76 aa)). O-(pantetheine 4'-phosphoryl)serine is present on Ser-37.

The protein belongs to the acyl carrier protein (ACP) family. Post-translationally, 4'-phosphopantetheine is transferred from CoA to a specific serine of apo-ACP by AcpS. This modification is essential for activity because fatty acids are bound in thioester linkage to the sulfhydryl of the prosthetic group.

The protein localises to the cytoplasm. It functions in the pathway lipid metabolism; fatty acid biosynthesis. In terms of biological role, carrier of the growing fatty acid chain in fatty acid biosynthesis. The protein is Acyl carrier protein of Methylobacterium sp. (strain 4-46).